The following is a 295-amino-acid chain: MLQGPGSLLLLFLASHCCLGSARGLFLFGQPDFSYKRSNCKPIPANLQLCHGIEYQNMRLPNLLGHETMKEVLEQAGAWIPLVMKQCHPDTKKFLCSLFAPVCLDDLDETIQPCHSLCVQVKDRCAPVMSAFGFPWPDMLECDRFPQDNDLCIPLASSDHLLPATEEAPKVCEACKNKNDDDNDIMETLCKNDFALKIKVKEITYINRDTKIILETKSKTIYKLNGVSERDLKKSVLWLKDSLQCTCEEMNDINAPYLVMGQKQGGELVITSVKRWQKGQREFKRISRSIRKLQC.

The signal sequence occupies residues 1–24; sequence MLQGPGSLLLLFLASHCCLGSARG. One can recognise an FZ domain in the interval 35–155; sequence YKRSNCKPIP…PQDNDLCIPL (121 aa). Intrachain disulfides connect Cys-40-Cys-103, Cys-50-Cys-96, Cys-87-Cys-125, Cys-114-Cys-152, Cys-118-Cys-142, Cys-172-Cys-245, Cys-175-Cys-247, and Cys-190-Cys-295. The region spanning 172-295 is the NTR domain; the sequence is CEACKNKNDD…ISRSIRKLQC (124 aa).

This sequence belongs to the secreted frizzled-related protein (sFRP) family. In terms of tissue distribution, expressed in adipose tissue, heart, brain, skeletal muscle, pancreas, thymus, prostate, testis, ovary, small intestine and colon. Highest levels in adipose tissue, small intestine and colon.

It is found in the secreted. Its function is as follows. Soluble frizzled-related proteins (sFRPS) function as modulators of Wnt signaling through direct interaction with Wnts. They have a role in regulating cell growth and differentiation in specific cell types. SFRP2 may be important for eye retinal development and for myogenesis. This is Secreted frizzled-related protein 2 (SFRP2) from Homo sapiens (Human).